The sequence spans 460 residues: Glutamyl-tRNA reductase (460 aa).

Substrate-binding positions include 48-51, Ser-100, 105-107, and Gln-111; these read TCNR and EDQ. The active-site Nucleophile is the Cys-49. 180-185 contacts NADP(+); it reads GAGEIG.

Belongs to the glutamyl-tRNA reductase family. As to quaternary structure, homodimer.

It carries out the reaction (S)-4-amino-5-oxopentanoate + tRNA(Glu) + NADP(+) = L-glutamyl-tRNA(Glu) + NADPH + H(+). Its pathway is porphyrin-containing compound metabolism; protoporphyrin-IX biosynthesis; 5-aminolevulinate from L-glutamyl-tRNA(Glu): step 1/2. Catalyzes the NADPH-dependent reduction of glutamyl-tRNA(Glu) to glutamate 1-semialdehyde (GSA). The protein is Glutamyl-tRNA reductase of Methanosarcina acetivorans (strain ATCC 35395 / DSM 2834 / JCM 12185 / C2A).